The following is a 407-amino-acid chain: 5-aminolevulinate synthase 2 (407 aa).

Residues Arg21 and Ser137 each contribute to the substrate site. Positions 189, 217, and 245 each coordinate pyridoxal 5'-phosphate. Lys248 is an active-site residue. Lys248 is modified (N6-(pyridoxal phosphate)lysine). Pyridoxal 5'-phosphate-binding residues include Thr277 and Thr278. Position 363 (Thr363) interacts with substrate.

The protein belongs to the class-II pyridoxal-phosphate-dependent aminotransferase family. As to quaternary structure, homodimer. Requires pyridoxal 5'-phosphate as cofactor.

It carries out the reaction succinyl-CoA + glycine + H(+) = 5-aminolevulinate + CO2 + CoA. Its pathway is porphyrin-containing compound metabolism; protoporphyrin-IX biosynthesis; 5-aminolevulinate from glycine: step 1/1. This Cereibacter sphaeroides (strain ATCC 17023 / DSM 158 / JCM 6121 / CCUG 31486 / LMG 2827 / NBRC 12203 / NCIMB 8253 / ATH 2.4.1.) (Rhodobacter sphaeroides) protein is 5-aminolevulinate synthase 2 (hemT).